Here is a 376-residue protein sequence, read N- to C-terminus: Arabinogalactan endo-beta-1,4-galactanase (376 aa).

The signal sequence occupies residues 1–17 (MKKKILAATAILLAAIA). The Proton donor role is filled by Glu-161. Residue Glu-270 is the Nucleophile of the active site. Ca(2+) is bound by residues Asp-281 and Asn-285.

The protein belongs to the glycosyl hydrolase 53 family. Ca(2+) serves as cofactor.

The catalysed reaction is The enzyme specifically hydrolyzes (1-&gt;4)-beta-D-galactosidic linkages in type I arabinogalactans.. In Cellvibrio japonicus (strain Ueda107) (Pseudomonas fluorescens subsp. cellulosa), this protein is Arabinogalactan endo-beta-1,4-galactanase (ganB).